A 66-amino-acid chain; its full sequence is Large ribosomal subunit protein uL29 (66 aa).

This sequence belongs to the universal ribosomal protein uL29 family.

This is Large ribosomal subunit protein uL29 from Roseiflexus castenholzii (strain DSM 13941 / HLO8).